Here is a 465-residue protein sequence, read N- to C-terminus: 23S rRNA (uracil(1939)-C(5))-methyltransferase RlmD (465 aa).

A disordered region spans residues 1-22 (MSEAVPTSARKSKNAPVAPGPA). Residues 16-80 (PVAPGPAPVL…PSYEQATVVD (65 aa)) enclose the TRAM domain. [4Fe-4S] cluster contacts are provided by cysteine 93, cysteine 99, cysteine 102, and cysteine 181. S-adenosyl-L-methionine is bound by residues glutamine 289, phenylalanine 318, asparagine 323, glutamate 339, asparagine 367, and aspartate 388. Residue cysteine 421 is the Nucleophile of the active site.

Belongs to the class I-like SAM-binding methyltransferase superfamily. RNA M5U methyltransferase family. RlmD subfamily.

It carries out the reaction uridine(1939) in 23S rRNA + S-adenosyl-L-methionine = 5-methyluridine(1939) in 23S rRNA + S-adenosyl-L-homocysteine + H(+). Catalyzes the formation of 5-methyl-uridine at position 1939 (m5U1939) in 23S rRNA. In Burkholderia cenocepacia (strain HI2424), this protein is 23S rRNA (uracil(1939)-C(5))-methyltransferase RlmD.